The following is a 197-amino-acid chain: Large ribosomal subunit protein eL15 (197 aa).

The disordered stretch occupies residues 175–197; that stretch reads LRTGRKGSSKSRPSIRANGRLRR.

This sequence belongs to the eukaryotic ribosomal protein eL15 family.

This Thermoplasma volcanium (strain ATCC 51530 / DSM 4299 / JCM 9571 / NBRC 15438 / GSS1) protein is Large ribosomal subunit protein eL15 (rpl15e).